Consider the following 63-residue polypeptide: 2-hydroxymuconate tautomerase (63 aa).

The Proton acceptor; via imino nitrogen role is filled by proline 2.

It belongs to the 4-oxalocrotonate tautomerase family. Homohexamer.

It catalyses the reaction (2Z,4E)-2-hydroxyhexa-2,4-dienedioate = (3E)-2-oxohex-3-enedioate. It functions in the pathway xenobiotic degradation; toluene degradation. The protein operates within xenobiotic degradation; xylene degradation. Catalyzes the ketonization of 2-hydroxymuconate stereoselectively to yield 2-oxo-3-hexenedioate. The chain is 2-hydroxymuconate tautomerase (xylH) from Pseudomonas putida (Arthrobacter siderocapsulatus).